Consider the following 433-residue polypeptide: G-protein coupled receptor 22 (433 aa).

Residues 1–45 (MCFSPILEINMQSESNITVRDDIDDINTNMYQPLSYPLSFQVSLT) lie on the Extracellular side of the membrane. A glycan (N-linked (GlcNAc...) asparagine) is linked at Asn16. The chain crosses the membrane as a helical span at residues 46-66 (GFLMLEIVLGLGSNLTVLVLY). Residues 67-85 (CMKSNLINSVSNIITMNLH) lie on the Cytoplasmic side of the membrane. The helical transmembrane segment at 86-106 (VLDVIICVGCIPLTIVILLLS) threads the bilayer. The Extracellular portion of the chain corresponds to 107–115 (LESNTALIC). A helical membrane pass occupies residues 116–136 (CFHEACVSFASVSTAINVFAI). Residues 137 to 156 (TLDRYDISVKPANRILTMGR) are Cytoplasmic-facing. A helical membrane pass occupies residues 157–177 (AVMLMISIWIFSFFSFLIPFI). The Extracellular segment spans residues 178–208 (EVNFFSLQSGNTWENKTLLCVSTNEYYTELG). Asn192 is a glycosylation site (N-linked (GlcNAc...) asparagine). The chain crosses the membrane as a helical span at residues 209-229 (MYYHLLVQIPIFFFTVVVMLI). Residues 230-315 (TYTKILQALN…ERQKRVFRMS (86 aa)) are Cytoplasmic-facing. A helical membrane pass occupies residues 316–336 (LLIISTFLLCWTPISVLNTTI). Residues 337–349 (LCLGPSDLLVKLR) lie on the Extracellular side of the membrane. A helical membrane pass occupies residues 350-370 (LCFLVMAYGTTIFHPLLYAFT). Over 371 to 433 (RQKFQKVLKS…KCLVPQVVTD (63 aa)) the chain is Cytoplasmic.

Belongs to the G-protein coupled receptor 1 family. As to expression, high expression in adult and fetal heart tissue. Expressed in the brain, with enrichment in the accumbens, amygdala, cerebellum, cortex, and hippocampus regions.

It is found in the cell membrane. In terms of biological role, orphan G-protein coupled receptor. Seems to act through a G(i)/G(o) mediated pathway. May be involved in ciliogenesis. This is G-protein coupled receptor 22 from Homo sapiens (Human).